The following is a 388-amino-acid chain: Chorismate synthase (388 aa).

NADP(+) contacts are provided by Arg40 and Arg46. FMN is bound by residues 131–133 (RSS), 252–253 (NA), Gly296, 311–315 (KPIPT), and Arg337.

This sequence belongs to the chorismate synthase family. Homotetramer. It depends on FMNH2 as a cofactor.

It carries out the reaction 5-O-(1-carboxyvinyl)-3-phosphoshikimate = chorismate + phosphate. The protein operates within metabolic intermediate biosynthesis; chorismate biosynthesis; chorismate from D-erythrose 4-phosphate and phosphoenolpyruvate: step 7/7. Catalyzes the anti-1,4-elimination of the C-3 phosphate and the C-6 proR hydrogen from 5-enolpyruvylshikimate-3-phosphate (EPSP) to yield chorismate, which is the branch point compound that serves as the starting substrate for the three terminal pathways of aromatic amino acid biosynthesis. This reaction introduces a second double bond into the aromatic ring system. The protein is Chorismate synthase of Limosilactobacillus fermentum (strain NBRC 3956 / LMG 18251) (Lactobacillus fermentum).